A 207-amino-acid polypeptide reads, in one-letter code: Ras-related protein Rab-7a (207 aa).

T2 carries the N-acetylthreonine modification. The GTP site is built by S17, G18, V19, G20, K21, T22, S23, S34, N35, Y37, and T40. T22 lines the Mg(2+) pocket. Positions 28 to 41 (YVNKKFSNQYKATI) match the Switch 1 motif. Residues T40 and D63 each contribute to the Mg(2+) site. Residue G66 participates in GTP binding. The Switch 2 signature appears at 67 to 82 (QERFQSLGVAFYRGAD). S72 is subject to Phosphoserine. 5 residues coordinate GTP: N125, K126, D128, A156, and K157. Residues K191 and K194 each participate in a glycyl lysine isopeptide (Lys-Gly) (interchain with G-Cter in ubiquitin) cross-link. Residues C205 and C207 are each lipidated (S-geranylgeranyl cysteine). At C207 the chain carries Cysteine methyl ester.

Belongs to the small GTPase superfamily. Rab family. As to quaternary structure, interacts with NTRK1/TRKA. Interacts with RILP. Interacts with PSMA7. Interacts with RNF115. Interacts with FYCO1. Interacts with the PIK3C3/VPS34-PIK3R4 complex. The GTP-bound form interacts with OSBPL1A. The GTP-bound form interacts with RAC1. Interacts with CLN3. Interacts with CHM, the substrate-binding subunit of the Rab geranylgeranyltransferase complex. Interacts with C9orf72. Does not interact with HPS4 and the BLOC-3 complex (heterodimer of HPS1 and HPS4). Interacts with CLN5. Interacts with PLEKHM1 (via N- and C-terminus). Interacts with PRPH; the interaction is direct. Interacts with VPS13A. The GDP-bound form interacts with RIMOC1. Interacts with the MON1A-CCZ1B complex and this interaction is enhanced in the presence of RIMOC1. Interacts with VPS39 and VPS41. Forms a ternary complex with LAMP2 and RUFY4; the interaction with LAMP2 is mediated by RUFY4 (via RUN and coiled coil domains). Requires Mg(2+) as cofactor. Deubiquitination at Lys-191 and Lys-194 by USP32. Post-translationally, phosphorylated at Ser-72 by LRRK1; phosphorylation is dependent on protein kinase C (PKC) activation of LRRK1. In terms of processing, prenylated. Prenylation is required for association with cellular membranes.

It localises to the cytoplasmic vesicle. Its subcellular location is the phagosome membrane. The protein localises to the late endosome membrane. The protein resides in the lysosome membrane. It is found in the melanosome membrane. It localises to the autophagosome membrane. Its subcellular location is the lipid droplet. The protein localises to the endosome membrane. The protein resides in the mitochondrion membrane. It carries out the reaction GTP + H2O = GDP + phosphate + H(+). Its activity is regulated as follows. Regulated by guanine nucleotide exchange factors (GEFs) which promote the exchange of bound GDP for free GTP. Regulated by GTPase activating proteins (GAPs) which increase the GTP hydrolysis activity. Inhibited by GDP dissociation inhibitors (GDIs). Its function is as follows. The small GTPases Rab are key regulators of intracellular membrane trafficking, from the formation of transport vesicles to their fusion with membranes. Rabs cycle between an inactive GDP-bound form and an active GTP-bound form that is able to recruit to membranes different sets of downstream effectors directly responsible for vesicle formation, movement, tethering and fusion. In its active state, RAB7A binds to a variety of effector proteins playing a key role in the regulation of endo-lysosomal trafficking. Governs early-to-late endosomal maturation, microtubule minus-end as well as plus-end directed endosomal migration and positioning, and endosome-lysosome transport through different protein-protein interaction cascades. Also plays a central role in growth-factor-mediated cell signaling, nutrient-transporter-mediated nutrient uptake, neurotrophin transport in the axons of neurons and lipid metabolism. Also involved in regulation of some specialized endosomal membrane trafficking, such as maturation of melanosomes, pathogen-induced phagosomes (or vacuoles) and autophagosomes. Plays a role in the maturation and acidification of phagosomes that engulf pathogens, such as S.aureus and Mycobacteria. Plays a role in the fusion of phagosomes with lysosomes. In concert with RAC1, plays a role in regulating the formation of RBs (ruffled borders) in osteoclasts. Controls the endosomal trafficking and neurite outgrowth signaling of NTRK1/TRKA. Regulates the endocytic trafficking of the EGF-EGFR complex by regulating its lysosomal degradation. Involved in the ADRB2-stimulated lipolysis through lipophagy, a cytosolic lipase-independent autophagic pathway. Required for the exosomal release of SDCBP, CD63 and syndecan. Required for vesicular trafficking and cell surface expression of ACE2. May play a role in PRPH neuronal intermediate filament assembly. In Bos taurus (Bovine), this protein is Ras-related protein Rab-7a (RAB7A).